The primary structure comprises 427 residues: Serine--tRNA ligase (427 aa).

Residue 236–238 (TAE) coordinates L-serine. 267-269 (RSE) is a binding site for ATP. Glu-290 provides a ligand contact to L-serine. 354-357 (EISS) provides a ligand contact to ATP. Ser-388 contributes to the L-serine binding site.

This sequence belongs to the class-II aminoacyl-tRNA synthetase family. Type-1 seryl-tRNA synthetase subfamily. Homodimer. The tRNA molecule binds across the dimer.

It is found in the cytoplasm. It carries out the reaction tRNA(Ser) + L-serine + ATP = L-seryl-tRNA(Ser) + AMP + diphosphate + H(+). The enzyme catalyses tRNA(Sec) + L-serine + ATP = L-seryl-tRNA(Sec) + AMP + diphosphate + H(+). It functions in the pathway aminoacyl-tRNA biosynthesis; selenocysteinyl-tRNA(Sec) biosynthesis; L-seryl-tRNA(Sec) from L-serine and tRNA(Sec): step 1/1. In terms of biological role, catalyzes the attachment of serine to tRNA(Ser). Is also able to aminoacylate tRNA(Sec) with serine, to form the misacylated tRNA L-seryl-tRNA(Sec), which will be further converted into selenocysteinyl-tRNA(Sec). The chain is Serine--tRNA ligase from Psychrobacter arcticus (strain DSM 17307 / VKM B-2377 / 273-4).